The sequence spans 424 residues: Serine--tRNA ligase (424 aa).

Thr-231–Glu-233 contributes to the L-serine binding site. An ATP-binding site is contributed by Arg-262–Glu-264. An L-serine-binding site is contributed by Glu-285. Position 349–352 (Glu-349–Ser-352) interacts with ATP. Position 385 (Ser-385) interacts with L-serine.

Belongs to the class-II aminoacyl-tRNA synthetase family. Type-1 seryl-tRNA synthetase subfamily. Homodimer. The tRNA molecule binds across the dimer.

Its subcellular location is the cytoplasm. The enzyme catalyses tRNA(Ser) + L-serine + ATP = L-seryl-tRNA(Ser) + AMP + diphosphate + H(+). It catalyses the reaction tRNA(Sec) + L-serine + ATP = L-seryl-tRNA(Sec) + AMP + diphosphate + H(+). It functions in the pathway aminoacyl-tRNA biosynthesis; selenocysteinyl-tRNA(Sec) biosynthesis; L-seryl-tRNA(Sec) from L-serine and tRNA(Sec): step 1/1. In terms of biological role, catalyzes the attachment of serine to tRNA(Ser). Is also able to aminoacylate tRNA(Sec) with serine, to form the misacylated tRNA L-seryl-tRNA(Sec), which will be further converted into selenocysteinyl-tRNA(Sec). This is Serine--tRNA ligase from Bacillus cereus (strain G9842).